A 167-amino-acid polypeptide reads, in one-letter code: NAD(P)H-quinone oxidoreductase subunit J (167 aa).

This sequence belongs to the complex I 30 kDa subunit family. NDH-1 can be composed of about 15 different subunits; different subcomplexes with different compositions have been identified which probably have different functions.

It is found in the cellular thylakoid membrane. It catalyses the reaction a plastoquinone + NADH + (n+1) H(+)(in) = a plastoquinol + NAD(+) + n H(+)(out). The catalysed reaction is a plastoquinone + NADPH + (n+1) H(+)(in) = a plastoquinol + NADP(+) + n H(+)(out). NDH-1 shuttles electrons from an unknown electron donor, via FMN and iron-sulfur (Fe-S) centers, to quinones in the respiratory and/or the photosynthetic chain. The immediate electron acceptor for the enzyme in this species is believed to be plastoquinone. Couples the redox reaction to proton translocation, and thus conserves the redox energy in a proton gradient. Cyanobacterial NDH-1 also plays a role in inorganic carbon-concentration. This Microcystis aeruginosa (strain NIES-843 / IAM M-2473) protein is NAD(P)H-quinone oxidoreductase subunit J.